Reading from the N-terminus, the 128-residue chain is Iron-sulfur cluster insertion protein ErpA (128 aa).

Iron-sulfur cluster is bound by residues cysteine 56, cysteine 120, and cysteine 122.

This sequence belongs to the HesB/IscA family. In terms of assembly, homodimer. Requires iron-sulfur cluster as cofactor.

Its function is as follows. Required for insertion of 4Fe-4S clusters for at least IspG. The sequence is that of Iron-sulfur cluster insertion protein ErpA from Xanthomonas axonopodis pv. citri (strain 306).